A 334-amino-acid polypeptide reads, in one-letter code: Glycerol-3-phosphate dehydrogenase [NAD(P)+] (334 aa).

NADPH-binding residues include Trp-13, Arg-33, and Lys-106. Residues Lys-106, Gly-137, and Ser-139 each contribute to the sn-glycerol 3-phosphate site. Ala-141 is a binding site for NADPH. Lys-192, Asp-245, Ser-255, Arg-256, and Asn-257 together coordinate sn-glycerol 3-phosphate. The Proton acceptor role is filled by Lys-192. An NADPH-binding site is contributed by Arg-256. Positions 280 and 282 each coordinate NADPH.

Belongs to the NAD-dependent glycerol-3-phosphate dehydrogenase family.

It is found in the cytoplasm. It carries out the reaction sn-glycerol 3-phosphate + NAD(+) = dihydroxyacetone phosphate + NADH + H(+). It catalyses the reaction sn-glycerol 3-phosphate + NADP(+) = dihydroxyacetone phosphate + NADPH + H(+). It functions in the pathway membrane lipid metabolism; glycerophospholipid metabolism. Catalyzes the reduction of the glycolytic intermediate dihydroxyacetone phosphate (DHAP) to sn-glycerol 3-phosphate (G3P), the key precursor for phospholipid synthesis. The polypeptide is Glycerol-3-phosphate dehydrogenase [NAD(P)+] (Chlamydia trachomatis serovar L2 (strain ATCC VR-902B / DSM 19102 / 434/Bu)).